The primary structure comprises 358 residues: 3-isopropylmalate dehydrogenase (358 aa).

Position 77–90 (77–90 (GPKWDNLPIDQRPE)) interacts with NAD(+). Residues R98, R108, R137, and D221 each coordinate substrate. Mg(2+) is bound by residues D221, D245, and D249. An NAD(+)-binding site is contributed by 279 to 291 (GSAPDIAHLNIAN).

Belongs to the isocitrate and isopropylmalate dehydrogenases family. LeuB type 1 subfamily. Homodimer. It depends on Mg(2+) as a cofactor. Requires Mn(2+) as cofactor.

The protein resides in the cytoplasm. The enzyme catalyses (2R,3S)-3-isopropylmalate + NAD(+) = 4-methyl-2-oxopentanoate + CO2 + NADH. The protein operates within amino-acid biosynthesis; L-leucine biosynthesis; L-leucine from 3-methyl-2-oxobutanoate: step 3/4. In terms of biological role, catalyzes the oxidation of 3-carboxy-2-hydroxy-4-methylpentanoate (3-isopropylmalate) to 3-carboxy-4-methyl-2-oxopentanoate. The product decarboxylates to 4-methyl-2 oxopentanoate. This chain is 3-isopropylmalate dehydrogenase, found in Campylobacter jejuni (strain RM1221).